Here is a 503-residue protein sequence, read N- to C-terminus: Probable 2-isopropylmalate synthase (503 aa).

Positions 8 to 259 (IRVFDTTLRD…KTNIKTEHLF (252 aa)) constitute a Pyruvate carboxyltransferase domain. Residues D17, H197, H199, and N233 each contribute to the a divalent metal cation site.

It belongs to the alpha-IPM synthase/homocitrate synthase family. As to quaternary structure, homodimer. A divalent metal cation is required as a cofactor.

It catalyses the reaction 3-methyl-2-oxobutanoate + acetyl-CoA + H2O = (2S)-2-isopropylmalate + CoA + H(+). It functions in the pathway amino-acid biosynthesis; L-leucine biosynthesis; L-leucine from 3-methyl-2-oxobutanoate: step 1/4. Catalyzes the condensation of the acetyl group of acetyl-CoA with 3-methyl-2-oxobutanoate (2-oxoisovalerate) to form 3-carboxy-3-hydroxy-4-methylpentanoate (2-isopropylmalate). The protein is Probable 2-isopropylmalate synthase (leuA) of Archaeoglobus fulgidus (strain ATCC 49558 / DSM 4304 / JCM 9628 / NBRC 100126 / VC-16).